The sequence spans 349 residues: Interferon regulatory factor 2 (349 aa).

The segment at residues 5-113 is a DNA-binding region (IRF tryptophan pentad repeat); it reads RMRMRPWLEE…NAFRVYRMLP (109 aa). N6-acetyllysine is present on residues Lys75 and Lys78. Positions 117–148 are disordered; sequence RPSKKGKKPKTEKEDKVKHIKQEPVESSLGLS. Residues 125 to 140 are compositionally biased toward basic and acidic residues; that stretch reads PKTEKEDKVKHIKQEP. Residue Lys137 forms a Glycyl lysine isopeptide (Lys-Gly) (interchain with G-Cter in SUMO); alternate linkage. Residue Lys137 forms a Glycyl lysine isopeptide (Lys-Gly) (interchain with G-Cter in SUMO2); alternate linkage. A Glycyl lysine isopeptide (Lys-Gly) (interchain with G-Cter in SUMO) cross-link involves residue Lys166. Ser225 carries the post-translational modification Phosphoserine. A compositionally biased stretch (polar residues) spans 228 to 239; sequence SSYAESETTDSV. A disordered region spans residues 228–251; sequence SSYAESETTDSVPSDEESAEGRPH. A Glycyl lysine isopeptide (Lys-Gly) (interchain with G-Cter in SUMO2) cross-link involves residue Lys260. Residue Lys293 forms a Glycyl lysine isopeptide (Lys-Gly) (interchain with G-Cter in SUMO) linkage. A disordered region spans residues 297 to 349; the sequence is NPVPYNSSWPPFQDLPLSSSMTPASSSSRPDRETRASVIKKTSDITQARVKSC. The span at 314 to 324 shows a compositional bias: low complexity; the sequence is SSSMTPASSSS.

It belongs to the IRF family. In terms of assembly, interacts with BRD7, IRF2BP1 and IRF2BP2. Interacts with CREBBP in growing cells; the interaction acetylates IRF2 and regulates IRF2-dependent H4 promoter activity. In terms of processing, acetylated by CBP/ p300 during cell-growth. Acetylation on Lys-75 is required for stimulation of H4 promoter activity. The major sites of sumoylation are Lys-137 and Lys-293. Sumoylation with SUMO1 increases its transcriptional repressor activity on IRF1 and diminishes its ability to activate ISRE and H4 promoter. In terms of tissue distribution, expressed throughout the epithelium of the colon. Also expressed in lamina propria.

It localises to the nucleus. Functionally, specifically binds to the upstream regulatory region of type I IFN and IFN-inducible MHC class I genes (the interferon consensus sequence (ICS)) and represses those genes. Also acts as an activator for several genes including H4 and IL7. Constitutively binds to the ISRE promoter to activate IL7. Involved in cell cycle regulation through binding the site II (HiNF-M) promoter region of H4 and activating transcription during cell growth. Antagonizes IRF1 transcriptional activation. This Homo sapiens (Human) protein is Interferon regulatory factor 2 (IRF2).